A 129-amino-acid polypeptide reads, in one-letter code: uncharacterized protein (129 aa).

A helical membrane pass occupies residues 33–50 (MGGNVMWFIALLFALLIA).

It localises to the membrane. This is an uncharacterized protein from Saccharomyces cerevisiae (strain ATCC 204508 / S288c) (Baker's yeast).